The primary structure comprises 186 residues: MTNSSGRRRPDVTTVEIIGGPEALEIGLSDYDARWAETYLRHRRRILDALGADVDVEHIGSTSVPGLAAKPIVDIVVAVADITSEEDYLDALLAAGYELRVREPGHRLVRTPGRDVHVHVYERGAAAVHEYLLFRDHLRADADDRALYENVKRALFEQPWNDMNDYSDAKSDVILAIKSRAGAARR.

Belongs to the UPF0157 (GrpB) family.

This is UPF0157 protein SCO7215 from Streptomyces coelicolor (strain ATCC BAA-471 / A3(2) / M145).